The chain runs to 427 residues: Ribosomal protein uS12 methylthiotransferase RimO (427 aa).

Residues Met1–Val116 enclose the MTTase N-terminal domain. [4Fe-4S] cluster-binding residues include Cys10, Cys46, Cys79, Cys145, Cys149, and Cys152. In terms of domain architecture, Radical SAM core spans Val131–Glu360. The TRAM domain maps to Glu363–Glu426.

Belongs to the methylthiotransferase family. RimO subfamily. Requires [4Fe-4S] cluster as cofactor.

Its subcellular location is the cytoplasm. It carries out the reaction L-aspartate(89)-[ribosomal protein uS12]-hydrogen + (sulfur carrier)-SH + AH2 + 2 S-adenosyl-L-methionine = 3-methylsulfanyl-L-aspartate(89)-[ribosomal protein uS12]-hydrogen + (sulfur carrier)-H + 5'-deoxyadenosine + L-methionine + A + S-adenosyl-L-homocysteine + 2 H(+). Functionally, catalyzes the methylthiolation of an aspartic acid residue of ribosomal protein uS12. This Thermosipho melanesiensis (strain DSM 12029 / CIP 104789 / BI429) protein is Ribosomal protein uS12 methylthiotransferase RimO.